The sequence spans 325 residues: Structure-specific endonuclease subunit SLX1 (325 aa).

In terms of domain architecture, GIY-YIG spans 10–92; the sequence is ALYTVYILRS…NNPHLSMHIP (83 aa). The SLX1-type zinc-finger motif lies at 230–284; it reads CVVCREEMKSGEGLHAVCTHEGCDGVGHISCWSRSFLKNNDTGSILPVQGQCPMC.

It belongs to the SLX1 family. As to quaternary structure, forms a heterodimer with SLX4. It depends on a divalent metal cation as a cofactor.

It localises to the nucleus. Functionally, catalytic subunit of the SLX1-SLX4 structure-specific endonuclease that resolves DNA secondary structures generated during DNA repair and recombination. Has endonuclease activity towards branched DNA substrates, introducing single-strand cuts in duplex DNA close to junctions with ss-DNA. This Chaetomium globosum (strain ATCC 6205 / CBS 148.51 / DSM 1962 / NBRC 6347 / NRRL 1970) (Soil fungus) protein is Structure-specific endonuclease subunit SLX1.